The primary structure comprises 380 residues: Putative 8-amino-7-oxononanoate synthase (380 aa).

Substrate is bound at residue arginine 18. Position 105 to 106 (105 to 106 (GY)) interacts with pyridoxal 5'-phosphate. Substrate is bound at residue histidine 130. Pyridoxal 5'-phosphate is bound by residues serine 178, 204–207 (DEAH), and 235–238 (TFGK). Lysine 238 is subject to N6-(pyridoxal phosphate)lysine. Threonine 352 serves as a coordination point for substrate.

Belongs to the class-II pyridoxal-phosphate-dependent aminotransferase family. BioF subfamily. In terms of assembly, homodimer. The cofactor is pyridoxal 5'-phosphate.

It catalyses the reaction 6-carboxyhexanoyl-[ACP] + L-alanine + H(+) = (8S)-8-amino-7-oxononanoate + holo-[ACP] + CO2. It participates in cofactor biosynthesis; biotin biosynthesis. In terms of biological role, catalyzes the decarboxylative condensation of pimeloyl-[acyl-carrier protein] and L-alanine to produce 8-amino-7-oxononanoate (AON), [acyl-carrier protein], and carbon dioxide. The polypeptide is Putative 8-amino-7-oxononanoate synthase (bioF) (Glaesserella parasuis serovar 5 (strain SH0165) (Haemophilus parasuis)).